We begin with the raw amino-acid sequence, 237 residues long: Early nodulin-like protein 1 (237 aa).

Positions 1 to 28 (MEASRRWPYAAWFMAVLGLVAVFSSSEA) are cleaved as a signal peptide. The Phytocyanin domain occupies 29-134 (YVFYAGGRDG…GQKLYIIVMA (106 aa)). Asn59 carries N-linked (GlcNAc...) asparagine glycosylation. Cys85 and Cys122 are oxidised to a cystine. Residues 139–215 (KPSEAPEPAG…SLGAPPPTSG (77 aa)) are disordered. Composition is skewed to low complexity over residues 140–152 (PSEA…AAGP) and 201–215 (MSRS…PTSG). The GPI-anchor amidated serine moiety is linked to residue Ser206. Positions 207–237 (LGAPPPTSGAAGLAGVVASVVVGVLGALLMF) are cleaved as a propeptide — removed in mature form.

It belongs to the early nodulin-like (ENODL) family. In terms of tissue distribution, expressed ubiquitously. Accumulates particularly in reproductive tissues, especially in maturing seeds.

The protein localises to the vacuole. It localises to the aleurone grain membrane. Functionally, may act as a carbohydrate transporter. The sequence is that of Early nodulin-like protein 1 from Oryza sativa subsp. japonica (Rice).